The chain runs to 258 residues: Type III pantothenate kinase (258 aa).

6–13 is an ATP binding site; that stretch reads DVGNTQIF. Position 107-110 (107-110) interacts with substrate; that stretch reads GADR. The Proton acceptor role is filled by D109. D130 contacts K(+). T133 serves as a coordination point for ATP. Residue T185 participates in substrate binding.

This sequence belongs to the type III pantothenate kinase family. As to quaternary structure, homodimer. Requires NH4(+) as cofactor. The cofactor is K(+).

It is found in the cytoplasm. It catalyses the reaction (R)-pantothenate + ATP = (R)-4'-phosphopantothenate + ADP + H(+). The protein operates within cofactor biosynthesis; coenzyme A biosynthesis; CoA from (R)-pantothenate: step 1/5. Catalyzes the phosphorylation of pantothenate (Pan), the first step in CoA biosynthesis. In Elusimicrobium minutum (strain Pei191), this protein is Type III pantothenate kinase.